A 159-amino-acid polypeptide reads, in one-letter code: Probable epoxidase scpX (159 aa).

The first 25 residues, 1–25, serve as a signal peptide directing secretion; that stretch reads MATLIRLLRLLPVASSSAVLMFALD. The next 2 membrane-spanning stretches (helical) occupy residues 59 to 79 and 96 to 116; these read WVLI…LFIS and LLFS…IAAI. 2 N-linked (GlcNAc...) asparagine glycosylation sites follow: Asn124 and Asn136. The chain crosses the membrane as a helical span at residues 139 to 159; that stretch reads RALLTDLPAWLCFIAAALKAL.

This sequence belongs to the epoxidase xenD family.

Its subcellular location is the membrane. Its pathway is mycotoxin biosynthesis. Functionally, probable epoxidase; part of the gene scp cluster that mediates the biosynthesis of a hirsutellone-like compound that has still to be identified. The sequence is that of Probable epoxidase scpX from Mollisia scopiformis (Conifer needle endophyte fungus).